A 616-amino-acid polypeptide reads, in one-letter code: Chaperone protein DnaK (616 aa).

Position 175 is a phosphothreonine; by autocatalysis (Thr175). Positions 579-605 (GGDPSQAGGFDPNAAGGAQQAPHDDNV) are disordered.

Belongs to the heat shock protein 70 family.

In terms of biological role, acts as a chaperone. The sequence is that of Chaperone protein DnaK from Clostridium botulinum (strain Alaska E43 / Type E3).